The primary structure comprises 441 residues: Transforming protein p54/c-ets-1 (441 aa).

The 86-residue stretch at 51-136 (ATFSGFAKEQ…EHLEILQKEE (86 aa)) folds into the PNT domain. The segment at 130–243 (EILQKEEAKP…DNMCMGRASR (114 aa)) is activation domain; required for transcription activation. The helix HI-1 stretch occupies residues 304–312 (FKDYVRDRA). The segment at 323–330 (AAALAGYT) is helix HI-2. A DNA-binding region (ETS) is located at residues 335 to 415 (IQLWQFLLEL…AGKRYVYRFV (81 aa)). A helix H4 region spans residues 418 to 422 (LQSLL). The tract at residues 426–432 (PEELHAM) is helix H5.

Belongs to the ETS family. Binds DNA as a homodimer; homodimerization is required for transcription activation.

The protein resides in the nucleus. Its subcellular location is the cytoplasm. Its activity is regulated as follows. Autoinhibited by a module composed of four alpha helices (HI-1, HI-2, H4, and H5) that flank the DNA-binding ETS domain, reducing the affinity for DNA. Functionally, transcription factor. Directly controls the expression of cytokine and chemokine genes in a wide variety of different cellular contexts. The polypeptide is Transforming protein p54/c-ets-1 (ETS1) (Gallus gallus (Chicken)).